The primary structure comprises 670 residues: Solute carrier organic anion transporter family member 1A5 (670 aa).

The Cytoplasmic portion of the chain corresponds to 1–20; it reads MGETEKRIATHGVRCFSKIK. Residues 21–40 form a helical membrane-spanning segment; the sequence is MFLLALTCAYVSKSLSGIYM. The Extracellular segment spans residues 41 to 59; sequence NSMLTQIERQFDIPTSIVG. The chain crosses the membrane as a helical span at residues 60 to 80; the sequence is LINGSFEIGNLLLIILVSYFG. Over 81-86 the chain is Cytoplasmic; the sequence is TKLHRP. Residues 87 to 111 form a helical membrane-spanning segment; the sequence is IMIGIGCVIMGLGCFLMSLPHFLMG. Topologically, residues 112–155 are extracellular; sequence RYEYETTISPTSNLSSNSFLCMENRTQTLKPTQDPAECVKEMKS. N-linked (GlcNAc...) asparagine glycosylation is found at Asn-124 and Asn-135. A helical transmembrane segment spans residues 156-184; sequence LMWIYVLVGNIIRGIGETPIMPLGISYIE. Residues 185–203 lie on the Cytoplasmic side of the membrane; it reads DFAKSENSPLYIGILESGK. A helical membrane pass occupies residues 204–224; that stretch reads MIGPIVGLLLGSFCARIYVDT. Residues 225–242 are Extracellular-facing; sequence GSVNTDDLTITPTDTRWV. A helical membrane pass occupies residues 243–267; it reads GAWWIGFLVCAGVNILTSIPFFFFP. Residues 268–311 lie on the Cytoplasmic side of the membrane; that stretch reads KTLPKEGLQDNVARTENDKEEKHREKAKEENRGITKDFLPFMKS. The chain crosses the membrane as a helical span at residues 312–333; that stretch reads LSCNPIYMLLILTSVLQINAFI. The Extracellular segment spans residues 334 to 353; it reads NMFTFLPKYLEQQYGKSTSE. Residues 354 to 377 form a helical membrane-spanning segment; that stretch reads VVLLIGVCNLPPICIGYLLIGFIM. Residues 378 to 381 are Cytoplasmic-facing; that stretch reads KKFR. A helical membrane pass occupies residues 382 to 405; it reads ITVKKAAYMAFCLSLFEYLLSYFH. Residues 406–513 are Extracellular-facing; it reads FMISCDNFQV…PECANKLQYF (108 aa). One can recognise a Kazal-like domain in the interval 433–488; the sequence is NKVLADCNTRCSCLTNTWDPVCGDNGLSYMSACLAGCEKSVGMGTHMVFQNCSCIQ. 3 disulfides stabilise this stretch: Cys-439–Cys-469, Cys-445–Cys-465, and Cys-454–Cys-486. Residues Asn-483 and Asn-492 are each glycosylated (N-linked (GlcNAc...) asparagine). Residues 514-536 form a helical membrane-spanning segment; sequence LIMSVIGSFIYSITAIPGYMVLL. Residues 537 to 545 are Cytoplasmic-facing; the sequence is RCIKSEEKS. A helical membrane pass occupies residues 546-571; that stretch reads LGIGLHAFCTRIFAGIPAPIYFGALI. Residues 572-605 are Extracellular-facing; the sequence is DRTCLHWGTLKCGEPGACRIYNINNFRRIYLVLP. The helical transmembrane segment at 606–623 threads the bilayer; the sequence is AALRGSSYLPAFFILILM. The Cytoplasmic portion of the chain corresponds to 624-670; it reads RKFQLPGEMYSSETELADMKQTVKKSECTDVHGIPKVENDGELKTKL.

Belongs to the organo anion transporter (TC 2.A.60) family. In terms of tissue distribution, expressed in brain, choroid plexus and lung, but not in liver or kidney.

The protein resides in the cell membrane. The protein localises to the basal cell membrane. It carries out the reaction taurocholate(out) = taurocholate(in). The enzyme catalyses glycocholate(out) = glycocholate(in). The catalysed reaction is taurochenodeoxycholate(out) = taurochenodeoxycholate(in). It catalyses the reaction tauroursodeoxycholate(out) = tauroursodeoxycholate(in). It carries out the reaction 3,3',5'-triiodo-L-thyronine(out) = 3,3',5'-triiodo-L-thyronine(in). The enzyme catalyses L-thyroxine(out) = L-thyroxine(in). The catalysed reaction is taurodeoxycholate(out) = taurodeoxycholate(in). It catalyses the reaction glycodeoxycholate(out) = glycodeoxycholate(in). It carries out the reaction glycochenodeoxycholate(out) = glycochenodeoxycholate(in). The enzyme catalyses glycoursodeoxycholate(out) = glycoursodeoxycholate(in). The catalysed reaction is estrone 3-sulfate(out) = estrone 3-sulfate(in). It catalyses the reaction prostaglandin E2(out) = prostaglandin E2(in). It carries out the reaction substance P(out) = substance P(in). Na(+)-independent transporter that mediates the cellular uptake of a broad range of organic anions such as the endogenous bile salts cholate and deoxycholate, either in their unconjugated or conjugated forms (taurocholate and glycocholate), estrone 3-sulfate and prostaglandin E2, at the plasma membrane. Responsible for intestinal absorption of bile acids. Capable of thyroid hormone transport (both T3 or 3,3',5'-triiodo-L-thyronine, and T4 or L-tyroxine). Plays roles in blood-brain and -cerebrospinal fluid barrier transport of organic anions and signal mediators, and in hormone uptake by neural cells. May also play a role in the reuptake of neuropeptides such as substance P/TAC1 and vasoactive intestinal peptide/VIP released from retinal neurons. Shows a pH-sensitive substrate specificity which may be ascribed to the protonation state of the binding site and leads to a stimulation of substrate transport in an acidic microenvironment. Hydrogencarbonate/HCO3(-) acts as the probable counteranion that exchanges for organic anions. May contribute to regulate the transport of organic compounds in testis across the blood-testis-barrier. The protein is Solute carrier organic anion transporter family member 1A5 (Slco1a5) of Mus musculus (Mouse).